The sequence spans 687 residues: MKKADAPARARELRDRIRAADHAYYVLDQPLLADAEYDRLMHELQALEADHPELVTADSPTQRVSGAPSERFERVVHREPMLSLGNVQSDDELQEFDARVRRLLGLPDGEPVGYVVEPKLDGLAVELVYRDGAFTSGSTRGDGVNGEDVTANLRVVGGLGANRGVPHALEGRPPPRVEVRGEVLLFKEHFEAMNRQLVRAGEAPFANPRNAAAGTLRQLDWRVTARRPLSFIAYEALLPGDDPWRTHWEKLEELAAWGFETNAENRRCRGLAEVLAYRDRMAERRFELPYDTDGIVVKVDDLDWRRRLGAASKFPRWAVAFKYPPQEEATRIRRIWASVGRTGVLTPVVDFDPVRLSGAMVARATLHNEDEMRRKDILEGDWVLVRRAGEVIPEVVKPLPERRTGAEQPFRFPAECPVCGARVVREEGEKVYRCTGAACPAQLVGRLCHFAQRRALDIEGLGEKLAAGLVERGQVKDFADLYAVPFEVWQQLFSRPRKEQDAGAARELPEKSAQNMVAALERSRKTTLRRFLFALGIPQVGEATAATLARHFGGLARVMDADEEALKGVRDVGPETAAEIRAWTQEPQNRRVVERLLAAGVTPEAEVVEARGPFAGKTVVLTGGLSTMSRDDAKAEIERRGGRVSGSVSRKTDLVVAGEDAGSKLEKARSLGVRIAGEEEFVRLLKE.

NAD(+) is bound by residues 34–38 (DAEYD), 83–84 (SL), and Glu117. The active-site N6-AMP-lysine intermediate is the Lys119. NAD(+)-binding residues include Arg140, Glu182, Lys298, and Lys322. Residues Cys416, Cys419, Cys434, and Cys439 each coordinate Zn(2+). The 79-residue stretch at 609–687 (EARGPFAGKT…EEEFVRLLKE (79 aa)) folds into the BRCT domain.

It belongs to the NAD-dependent DNA ligase family. LigA subfamily. Requires Mg(2+) as cofactor. The cofactor is Mn(2+).

The enzyme catalyses NAD(+) + (deoxyribonucleotide)n-3'-hydroxyl + 5'-phospho-(deoxyribonucleotide)m = (deoxyribonucleotide)n+m + AMP + beta-nicotinamide D-nucleotide.. DNA ligase that catalyzes the formation of phosphodiester linkages between 5'-phosphoryl and 3'-hydroxyl groups in double-stranded DNA using NAD as a coenzyme and as the energy source for the reaction. It is essential for DNA replication and repair of damaged DNA. The chain is DNA ligase from Anaeromyxobacter sp. (strain K).